A 57-amino-acid polypeptide reads, in one-letter code: Large ribosomal subunit protein bL32 (57 aa).

It belongs to the bacterial ribosomal protein bL32 family.

This is Large ribosomal subunit protein bL32 from Staphylococcus saprophyticus subsp. saprophyticus (strain ATCC 15305 / DSM 20229 / NCIMB 8711 / NCTC 7292 / S-41).